A 257-amino-acid chain; its full sequence is Non-homologous end joining protein Ku (257 aa).

One can recognise a Ku domain in the interval 9–184 (TFGMVAIPIG…YTKPEVNEQE (176 aa)).

Belongs to the prokaryotic Ku family. Homodimer. Interacts with LigD.

With LigD forms a non-homologous end joining (NHEJ) DNA repair enzyme, which repairs dsDNA breaks with reduced fidelity. Binds linear dsDNA with 5'- and 3'- overhangs but not closed circular dsDNA nor ssDNA. Recruits and stimulates the ligase activity of LigD. This chain is Non-homologous end joining protein Ku, found in Lachnoclostridium phytofermentans (strain ATCC 700394 / DSM 18823 / ISDg) (Clostridium phytofermentans).